The chain runs to 290 residues: Shikimate kinase (290 aa).

81-91 (PIASGLKSSSA) is an ATP binding site.

The protein belongs to the GHMP kinase family. Archaeal shikimate kinase subfamily.

It is found in the cytoplasm. It carries out the reaction shikimate + ATP = 3-phosphoshikimate + ADP + H(+). The protein operates within metabolic intermediate biosynthesis; chorismate biosynthesis; chorismate from D-erythrose 4-phosphate and phosphoenolpyruvate: step 5/7. This is Shikimate kinase from Methanocella arvoryzae (strain DSM 22066 / NBRC 105507 / MRE50).